We begin with the raw amino-acid sequence, 576 residues long: Septation ring formation regulator EzrA (576 aa).

Over 1–7 the chain is Extracellular; it reads MSSTVII. Residues 8-26 form a helical membrane-spanning segment; sequence LIVVLLVILVAFYAFAILM. Over 27-576 the chain is Cytoplasmic; that stretch reads RKKTEDRILA…FKNKPTPDYL (550 aa). Coiled-coil stretches lie at residues 105–134, 254–305, and 356–402; these read RARE…VAQL, ENVN…FERE, and GYQE…IEKN.

The protein belongs to the EzrA family.

The protein localises to the cell membrane. Its function is as follows. Negative regulator of FtsZ ring formation; modulates the frequency and position of FtsZ ring formation. Inhibits FtsZ ring formation at polar sites. Interacts either with FtsZ or with one of its binding partners to promote depolymerization. The chain is Septation ring formation regulator EzrA from Lactococcus lactis subsp. cremoris (strain MG1363).